The sequence spans 280 residues: Bis(5'-nucleosyl)-tetraphosphatase, symmetrical (280 aa).

The protein belongs to the Ap4A hydrolase family.

It catalyses the reaction P(1),P(4)-bis(5'-adenosyl) tetraphosphate + H2O = 2 ADP + 2 H(+). In terms of biological role, hydrolyzes diadenosine 5',5'''-P1,P4-tetraphosphate to yield ADP. In Shigella boydii serotype 18 (strain CDC 3083-94 / BS512), this protein is Bis(5'-nucleosyl)-tetraphosphatase, symmetrical.